The primary structure comprises 24 residues: Lectin (24 aa).

Polar residues predominate over residues 1 to 18 (AEEQSFSSTKFSTDQPNL). The disordered stretch occupies residues 1-24 (AEEQSFSSTKFSTDQPNLILQGDA).

It belongs to the leguminous lectin family. In terms of assembly, homotetramer.

This is Lectin from Crotalaria juncea (Sunn hemp).